Consider the following 355-residue polypeptide: Guanine nucleotide-binding protein G(i) subunit alpha-2 (355 aa).

Residue Gly-2 is the site of N-myristoyl glycine attachment. Cys-3 carries the S-palmitoyl cysteine lipid modification. One can recognise a G-alpha domain in the interval 32 to 355 (REVKLLLLGA…KNNLKDCGLF (324 aa)). The G1 motif stretch occupies residues 35–48 (KLLLLGAGESGKST). GTP-binding positions include 40–47 (GAGESGKS), 176–182 (LRTRVKT), 201–205 (DVGGQ), 270–273 (NKKD), and Ala-327. Residues Ser-47 and Thr-182 each contribute to the Mg(2+) site. Residues 174-182 (DVLRTRVKT) are G2 motif. The tract at residues 197–206 (FKMFDVGGQR) is G3 motif. Positions 266-273 (ILFLNKKD) are G4 motif. Residues 325-330 (TCATDT) are G5 motif.

It belongs to the G-alpha family. G(i/o/t/z) subfamily. G proteins are composed of 3 units; alpha, beta and gamma. The alpha chain contains the guanine nucleotide binding site. In this context, interacts with GNB2. Interacts with UNC5B. Interacts with GPSM1. Interacts with RGS12 and RGS14. Interacts (inactive GDP-bound form) with NUCB1 (via GBA motif); the interaction leads to activation of GNAI3. Interacts (inactive GDP-bound form) with CCDC88C/DAPLE (via GBA motif). Interacts (inactive GDP-bound form) with CCDC8A/GIV (via GBA motif).

The protein resides in the cytoplasm. The protein localises to the cell membrane. It is found in the cytoskeleton. It localises to the microtubule organizing center. Its subcellular location is the centrosome. The protein resides in the membrane. Functionally, guanine nucleotide-binding proteins (G proteins) are involved as modulators or transducers in various transmembrane signaling systems. The G(i) proteins are involved in hormonal regulation of adenylate cyclase: they inhibit the cyclase in response to beta-adrenergic stimuli. May play a role in cell division. This Rattus norvegicus (Rat) protein is Guanine nucleotide-binding protein G(i) subunit alpha-2 (Gnai2).